The sequence spans 246 residues: 3-deoxy-manno-octulosonate cytidylyltransferase (246 aa).

It belongs to the KdsB family.

Its subcellular location is the cytoplasm. The enzyme catalyses 3-deoxy-alpha-D-manno-oct-2-ulosonate + CTP = CMP-3-deoxy-beta-D-manno-octulosonate + diphosphate. It participates in nucleotide-sugar biosynthesis; CMP-3-deoxy-D-manno-octulosonate biosynthesis; CMP-3-deoxy-D-manno-octulosonate from 3-deoxy-D-manno-octulosonate and CTP: step 1/1. The protein operates within bacterial outer membrane biogenesis; lipopolysaccharide biosynthesis. In terms of biological role, activates KDO (a required 8-carbon sugar) for incorporation into bacterial lipopolysaccharide in Gram-negative bacteria. The polypeptide is 3-deoxy-manno-octulosonate cytidylyltransferase (Rickettsia peacockii (strain Rustic)).